We begin with the raw amino-acid sequence, 430 residues long: Enolase (430 aa).

Residue Gln163 coordinates (2R)-2-phosphoglycerate. The Proton donor role is filled by Glu205. Residues Asp242, Glu285, and Asp312 each contribute to the Mg(2+) site. The (2R)-2-phosphoglycerate site is built by Lys337, Arg366, Ser367, and Lys388. The active-site Proton acceptor is Lys337.

This sequence belongs to the enolase family. Mg(2+) is required as a cofactor.

It is found in the cytoplasm. Its subcellular location is the secreted. The protein localises to the cell surface. It catalyses the reaction (2R)-2-phosphoglycerate = phosphoenolpyruvate + H2O. It participates in carbohydrate degradation; glycolysis; pyruvate from D-glyceraldehyde 3-phosphate: step 4/5. Functionally, catalyzes the reversible conversion of 2-phosphoglycerate (2-PG) into phosphoenolpyruvate (PEP). It is essential for the degradation of carbohydrates via glycolysis. This is Enolase from Rhodopseudomonas palustris (strain BisB18).